A 634-amino-acid chain; its full sequence is Protection of telomeres protein 1 (634 aa).

DNA-binding regions lie at residues 33-48 and 270-273; these read KPPY…SVVT and SYGR.

Belongs to the telombin family. Homodimer or homooligomer. Component of the shelterin complex (telosome) composed of TERF1, TERF2, TINF2, TERF2IP, ACD and POT1. Binds single-stranded telomeric DNA as a monomer. Associated component of the telomerase holoenzyme complex. Found in a complex with TERF1, TINF2 and TNKS1. Interacts with TNKS1. Forms heterodimers with ACD. Identified in a complex with ACD and single-stranded telomeric DNA. As to expression, ubiquitous.

It localises to the nucleus. It is found in the chromosome. Its subcellular location is the telomere. In terms of biological role, component of the telomerase ribonucleoprotein (RNP) complex that is essential for the replication of chromosome termini. Is a component of the double-stranded telomeric DNA-binding TRF1 complex which is involved in the regulation of telomere length by cis-inhibition of telomerase. Also acts as a single-stranded telomeric DNA-binding protein and thus may act as a downstream effector of the TRF1 complex and may transduce information about telomere maintenance and/or length to the telomere terminus. Component of the shelterin complex (telosome) that is involved in the regulation of telomere length and protection. Shelterin associates with arrays of double-stranded TTAGGG repeats added by telomerase and protects chromosome ends; without its protective activity, telomeres are no longer hidden from the DNA damage surveillance and chromosome ends are inappropriately processed by DNA repair pathways. Binds to two or more telomeric single-stranded 5'-TTAGGG-3' repeats (G-strand) and with high specificity to a minimal telomeric single-stranded 5'-TAGGGTTAG-3' sequence. Binds telomeric single-stranded sequences internally or at proximity of a 3'-end. Its activity is TERT dependent but it does not increase TERT activity by itself. In contrast, the ACD-POT1 heterodimer enhances telomere elongation by increasing telomerase processivity. The sequence is that of Protection of telomeres protein 1 (POT1) from Homo sapiens (Human).